The sequence spans 48 residues: ATP synthase protein 8 (48 aa).

Residues 13 to 32 (LVYGFALVTILLVLFAQYFL) traverse the membrane as a helical segment.

This sequence belongs to the ATPase protein 8 family. In terms of assembly, F-type ATPases have 2 components, CF(1) - the catalytic core - and CF(0) - the membrane proton channel.

The protein localises to the mitochondrion membrane. Functionally, mitochondrial membrane ATP synthase (F(1)F(0) ATP synthase or Complex V) produces ATP from ADP in the presence of a proton gradient across the membrane which is generated by electron transport complexes of the respiratory chain. F-type ATPases consist of two structural domains, F(1) - containing the extramembraneous catalytic core and F(0) - containing the membrane proton channel, linked together by a central stalk and a peripheral stalk. During catalysis, ATP synthesis in the catalytic domain of F(1) is coupled via a rotary mechanism of the central stalk subunits to proton translocation. Part of the complex F(0) domain. Minor subunit located with subunit a in the membrane. In Kluyveromyces lactis (strain ATCC 8585 / CBS 2359 / DSM 70799 / NBRC 1267 / NRRL Y-1140 / WM37) (Yeast), this protein is ATP synthase protein 8 (ATP8).